A 336-amino-acid chain; its full sequence is MIVLGIESSCDETGLAIYDYSKKKLIADELYSQVKLHKKYGGVVPELASREHIAKLNLLAKKIFKETGLSFEDIDCIAYTAMPGLVGALMVGATFAKTLGLIHNIDTIAVHHLEGHLLSPLLDHNSNIEYPFVALLVSGGHTQLFEVKEFGEYSLLGESIDDAAGEAFDKTAKLLGMGYPGGVEVANLADQATDKSKYILPRPMKNKPNLDFSFSGLKTAVLNTWYDEQDQSLENKANLCYAFQDAAIDVLVSKCAKALQKTKNTRLVISGGVSANKLLRHQLDLLAKNRGYQIFFPPMKYCTDNGAMIAQAGAYRYVNGFKDSNLEINVKARSPL.

The Fe cation site is built by histidine 112 and histidine 116. Substrate is bound by residues 136-140, aspartate 169, glycine 182, and asparagine 276; that span reads LVSGG. Aspartate 304 is a Fe cation binding site.

This sequence belongs to the KAE1 / TsaD family. Fe(2+) is required as a cofactor.

It localises to the cytoplasm. The enzyme catalyses L-threonylcarbamoyladenylate + adenosine(37) in tRNA = N(6)-L-threonylcarbamoyladenosine(37) in tRNA + AMP + H(+). Its function is as follows. Required for the formation of a threonylcarbamoyl group on adenosine at position 37 (t(6)A37) in tRNAs that read codons beginning with adenine. Is involved in the transfer of the threonylcarbamoyl moiety of threonylcarbamoyl-AMP (TC-AMP) to the N6 group of A37, together with TsaE and TsaB. TsaD likely plays a direct catalytic role in this reaction. The protein is tRNA N6-adenosine threonylcarbamoyltransferase of Francisella tularensis subsp. novicida (strain U112).